The primary structure comprises 185 residues: Ribosome-recycling factor (185 aa).

Belongs to the RRF family.

It is found in the cytoplasm. In terms of biological role, responsible for the release of ribosomes from messenger RNA at the termination of protein biosynthesis. May increase the efficiency of translation by recycling ribosomes from one round of translation to another. In Halothermothrix orenii (strain H 168 / OCM 544 / DSM 9562), this protein is Ribosome-recycling factor.